A 433-amino-acid polypeptide reads, in one-letter code: Lipase 2 (433 aa).

The Involved in the stabilization of the negatively charged intermediate by the formation of the oxyanion hole signature appears at 165 to 167 (HGG). Ser-239 (charge relay system) is an active-site residue. Residues Asp-361 and His-391 contribute to the active site.

The protein belongs to the 'GDXG' lipolytic enzyme family.

The enzyme catalyses a triacylglycerol + H2O = a diacylglycerol + a fatty acid + H(+). The chain is Lipase 2 (lip2) from Moraxella sp. (strain TA144).